The chain runs to 676 residues: UvrABC system protein C (676 aa).

The 80-residue stretch at 16-95 (VEPGVYRFRD…IKEFDPRFNI (80 aa)) folds into the GIY-YIG domain. The UVR domain maps to 208 to 243 (DRLVRDLERKMTAAAEDLDFERAARLRDDIGALRRA).

It belongs to the UvrC family. In terms of assembly, interacts with UvrB in an incision complex.

It is found in the cytoplasm. In terms of biological role, the UvrABC repair system catalyzes the recognition and processing of DNA lesions. UvrC both incises the 5' and 3' sides of the lesion. The N-terminal half is responsible for the 3' incision and the C-terminal half is responsible for the 5' incision. The chain is UvrABC system protein C from Mycobacterium sp. (strain KMS).